A 202-amino-acid chain; its full sequence is uncharacterized protein (202 aa).

Disordered stretches follow at residues 1–21 (MAEF…LRVP) and 149–202 (LPAA…AAET).

This is an uncharacterized protein from Torque teno virus 1 (isolate TA278).